A 1018-amino-acid polypeptide reads, in one-letter code: MDEDSSMVADNDQDREFQSLDGGQSPSPMERETPQQMNDQSPPPEGGSVPTPPPSDPNPATSQQQAAAVVGQEQQPALVVGPRCAPTYSVVDAMMDKKEDGPGPRCGHTLTAVPAVGDEGTPGYIGPRLVLFGGATALEGNSGGTGTPTSAGSAGIRLAGATADVHCYDVLSNKWTRLTPFGEPPTPRAAHVATAVGTMVVIQGGIGPAGLSAEDLHVLDLTQQRPRWHRVVVQGPGPGPRYGHVMALVGQRYLMAIGGNDGKRPLADVWALDTAAKPYEWRKLEPEGEGPPPCMYATASARSDGLLLLCGGRDANSVPLASAYGLAKHRDGRWEWAIAPGVSPSSRYQHAAVFVNARLHVSGGALGGGRMVEDSSSVAVLDTAAGVWCDTKSVVTSPRTGRYSADAAGGDASVELTRRCRHAAAAVGDLIFIYGGLRGGVLLDDLLVAEDLAAAETTYAASHAAAAAATNSPPGRLPGRYGFSDERNRELSESAADGAVVLGSPVAPPVNGDMHTDISPENALLPGTRRTNKGVEYLVEASAAEAEAISATLAAAKARQVNGEVELPDRDCGAEATPSGKPTFSLIKPDSMGSMSVTPAGIRLHHRAVVVAAETGGALGGMVRQLSIDQFENEGRRVSYGTPESATAARKLLDRQMSINSVPKKVIAHLLKPRGWKPPVRRQFFLDCNEIADLCDSAERIFASEPTVLQLKAPIKIFGDLHGQFGDLMRLFDEYGSPSTAGDISYIDYLFLGDYVDRGQHSLETISLLLALKVEYQHNVHLIRGNHEAADINALFGFRIECIERMGERDGIWVWHRINRLFNWLPLAASIEKKIICMHGGIGRSINHVEQIENIQRPITMEAGSIVLMDLLWSDPTENDSVEGLRPNARGPGLVTFGPDRVMEFCNNNDLQLIVRAHECVMDGFERFAQGHLITLFSATNYCGTANNAGAILVLGRDLVVVPKLIHPLPPALSSPETSPERHIEDTWMQELNANRPATPTRGRPQNSNDRGGSLAWM.

The disordered stretch occupies residues 1–75 (MDEDSSMVAD…AAAVVGQEQQ (75 aa)). Positions 41–57 (SPPPEGGSVPTPPPSDP) are enriched in pro residues. Positions 63 to 75 (QQQAAAVVGQEQQ) are enriched in low complexity. Kelch repeat units follow at residues 149–195 (TSAG…VATA), 253–301 (YLMA…TASA), 306–356 (LLLL…VFVN), 362–409 (SGGA…DAAG), and 430–479 (LIFI…RLPG). The segment at 569-590 (DRDCGAEATPSGKPTFSLIKPD) is disordered. Residue serine 627 is modified to Phosphoserine. Mn(2+) contacts are provided by aspartate 720, histidine 722, aspartate 754, and asparagine 786. The active-site Proton donor is the histidine 787. The Mn(2+) site is built by histidine 839 and histidine 918. Serine 975 carries the phosphoserine modification. Over residues 994-1011 (ANRPATPTRGRPQNSNDR) the composition is skewed to polar residues. Positions 994-1018 (ANRPATPTRGRPQNSNDRGGSLAWM) are disordered.

Belongs to the PPP phosphatase family. BSU subfamily. As to quaternary structure, interacts with BSK8. Mn(2+) serves as cofactor. In terms of tissue distribution, expressed throughout the plant, with a higher level in younger parts.

It is found in the cytoplasm. The protein resides in the cell membrane. Its subcellular location is the nucleus. The catalysed reaction is O-phospho-L-seryl-[protein] + H2O = L-seryl-[protein] + phosphate. The enzyme catalyses O-phospho-L-threonyl-[protein] + H2O = L-threonyl-[protein] + phosphate. Its function is as follows. Phosphatase involved in elongation process, probably by acting as a regulator of brassinolide signaling. In Arabidopsis thaliana (Mouse-ear cress), this protein is Serine/threonine-protein phosphatase BSL2 (BSL2).